The sequence spans 346 residues: Outer membrane protein A (346 aa).

The signal sequence occupies residues 1–21 (MKKTAIAIAVALAGFATVAQA). Transmembrane regions (beta stranded) follow at residues 27–37 (TWYTGAKLGWS), 55–66 (QLGAGAFGGYQV), 70–78 (VGFEMGYDW), 96–107 (QGVQLTAKLGYP), 112–120 (LDIYTRLGG), 142–151 (PVFAGGVEYA), 156–163 (IATRLEYQ), and 182–190 (MLSLGVSYR). The interval 197–208 (APVVAPAPAPAP) is hinge-like. Repeat copies occupy residues 201-202 (AP), 203-204 (AP), 205-206 (AP), and 207-208 (AP). Residues 201–208 (APAPAPAP) are 4 X 2 AA tandem repeats of A-P. An OmpA-like domain is found at 210–338 (VQTKHFTLKS…RVEIEVKGIK (129 aa)). Residues Cys-311 and Cys-323 are joined by a disulfide bond.

Belongs to the outer membrane OOP (TC 1.B.6) superfamily. OmpA family. In terms of assembly, monomer and homodimer.

The protein localises to the cell outer membrane. Its function is as follows. With TolR probably plays a role in maintaining the position of the peptidoglycan cell wall in the periplasm. Acts as a porin with low permeability that allows slow penetration of small solutes; an internal gate slows down solute passage. In terms of biological role, required for conjugation with F-type plasmids; probably serves as the mating receptor on recipient cells. This chain is Outer membrane protein A, found in Escherichia coli O157:H7.